A 162-amino-acid chain; its full sequence is GTP-dependent dephospho-CoA kinase (162 aa).

GTP is bound by residues aspartate 40, valine 41, valine 42, aspartate 59, lysine 61, and glutamate 111.

It belongs to the GTP-dependent DPCK family.

The enzyme catalyses 3'-dephospho-CoA + GTP = GDP + CoA + H(+). It participates in cofactor biosynthesis; coenzyme A biosynthesis. Catalyzes the GTP-dependent phosphorylation of the 3'-hydroxyl group of dephosphocoenzyme A to form coenzyme A (CoA). This Sulfurisphaera tokodaii (strain DSM 16993 / JCM 10545 / NBRC 100140 / 7) (Sulfolobus tokodaii) protein is GTP-dependent dephospho-CoA kinase.